Consider the following 191-residue polypeptide: Zinc finger protein GIS2 (191 aa).

The C2H2-type zinc-finger motif lies at 55–77; the sequence is FKCHYCFRNFPTSQALGGHQNAH.

Expressed in inflorescence meristems, floral meristems and stem epidermis.

The protein localises to the nucleus. In terms of biological role, probable transcription factor required for the initiation of inflorescence trichomes in response to gibberellin and cytokinin. Is not involved in the regulation of trichome branching. Is functionally equivalent to ZFP8. The polypeptide is Zinc finger protein GIS2 (GIS2) (Arabidopsis thaliana (Mouse-ear cress)).